A 469-amino-acid chain; its full sequence is UDP-N-acetylmuramate--L-alanine ligase (469 aa).

An ATP-binding site is contributed by 122 to 128 (GTHGKTT).

Belongs to the MurCDEF family.

It is found in the cytoplasm. The enzyme catalyses UDP-N-acetyl-alpha-D-muramate + L-alanine + ATP = UDP-N-acetyl-alpha-D-muramoyl-L-alanine + ADP + phosphate + H(+). Its pathway is cell wall biogenesis; peptidoglycan biosynthesis. Cell wall formation. The sequence is that of UDP-N-acetylmuramate--L-alanine ligase from Legionella pneumophila (strain Lens).